The sequence spans 326 residues: Acetyl-coenzyme A carboxylase carboxyl transferase subunit beta (326 aa).

The CoA carboxyltransferase N-terminal domain maps to 25 to 308 (LWVKCPASGE…RRDDRSTLQL (284 aa)). Positions 298–326 (RRRDDRSTLQLTPPKTHAPKPPEPKVKPD) are disordered. Residues 317-326 (KPPEPKVKPD) show a composition bias toward basic and acidic residues.

Belongs to the AccD/PCCB family. Acetyl-CoA carboxylase is a heterohexamer composed of biotin carboxyl carrier protein (AccB), biotin carboxylase (AccC) and two subunits each of ACCase subunit alpha (AccA) and ACCase subunit beta (AccD).

Its subcellular location is the cytoplasm. It carries out the reaction N(6)-carboxybiotinyl-L-lysyl-[protein] + acetyl-CoA = N(6)-biotinyl-L-lysyl-[protein] + malonyl-CoA. The protein operates within lipid metabolism; malonyl-CoA biosynthesis; malonyl-CoA from acetyl-CoA: step 1/1. Its function is as follows. Component of the acetyl coenzyme A carboxylase (ACC) complex. Biotin carboxylase (BC) catalyzes the carboxylation of biotin on its carrier protein (BCCP) and then the CO(2) group is transferred by the transcarboxylase to acetyl-CoA to form malonyl-CoA. The sequence is that of Acetyl-coenzyme A carboxylase carboxyl transferase subunit beta from Hyphomonas neptunium (strain ATCC 15444).